The following is a 367-amino-acid chain: N-acetylmuramoyl-L-alanine amidase BlyA (367 aa).

Residues 24 to 158 (VKKCVLHYTA…DITHKNCPAP (135 aa)) form the N-acetylmuramoyl-L-alanine amidase domain. The segment at 178–204 (SGKSVSKASPTKPTTSSPSSSSAVSGS) is disordered. Residues 180-204 (KSVSKASPTKPTTSSPSSSSAVSGS) show a composition bias toward low complexity. SH3b domains lie at 202 to 271 (SGSL…YVDV) and 298 to 367 (GKIK…GSTI).

It belongs to the N-acetylmuramoyl-L-alanine amidase 2 family.

Its subcellular location is the secreted. The catalysed reaction is Hydrolyzes the link between N-acetylmuramoyl residues and L-amino acid residues in certain cell-wall glycopeptides.. Its function is as follows. Autolysins are involved in some important biological processes such as cell separation, cell-wall turnover, competence for genetic transformation, formation of the flagella and sporulation. Involved in prophage SP-beta-mediated cell lysis. The protein is N-acetylmuramoyl-L-alanine amidase BlyA (blyA) of Bacillus subtilis (strain 168).